Here is a 259-residue protein sequence, read N- to C-terminus: Thiazole synthase (259 aa).

The active-site Schiff-base intermediate with DXP is the Lys-99. 1-deoxy-D-xylulose 5-phosphate contacts are provided by residues Gly-160, 187 to 188 (AG), and 209 to 210 (NT).

It belongs to the ThiG family. As to quaternary structure, homotetramer. Forms heterodimers with either ThiH or ThiS.

It localises to the cytoplasm. It carries out the reaction [ThiS sulfur-carrier protein]-C-terminal-Gly-aminoethanethioate + 2-iminoacetate + 1-deoxy-D-xylulose 5-phosphate = [ThiS sulfur-carrier protein]-C-terminal Gly-Gly + 2-[(2R,5Z)-2-carboxy-4-methylthiazol-5(2H)-ylidene]ethyl phosphate + 2 H2O + H(+). It functions in the pathway cofactor biosynthesis; thiamine diphosphate biosynthesis. In terms of biological role, catalyzes the rearrangement of 1-deoxy-D-xylulose 5-phosphate (DXP) to produce the thiazole phosphate moiety of thiamine. Sulfur is provided by the thiocarboxylate moiety of the carrier protein ThiS. In vitro, sulfur can be provided by H(2)S. The sequence is that of Thiazole synthase from Solibacter usitatus (strain Ellin6076).